The sequence spans 284 residues: MSVIKDCFLNLLDRWRPPKTSRPWKPGQRVALVWPKDRCLVIRRRWRLVRDEGRDAQRLASYLCCPEPLRFVGSICTYNFLKHKGDHNVPSELYLGASGAMYLWTDHIYSDSLTFVAESITEFLNIGLRRCNFITVPEELPHTASLRALAGCMHIHAFAQWRATYRGRLMVMGDYSVIRVSTIRLYDWSEINDWRVMVGSNHVEPLGWLVSPYDVINLFVDDCMRVFAANNQHVCIVADSLMEFVTRGMTRCHENGIYYGTRSMRKLNKPTCPYGVDHQLFDDA.

This sequence belongs to the herpesviridae US22 family. Interacts with host NMI; this interaction inhibits NMI interaction with STAT1.

Its subcellular location is the virion tegument. The protein resides in the host cytoplasm. Functionally, plays a role in the inhibition of host innate immune response by disrupting the interaction between NMI and STAT1. In turn, NMI-mediated transcription of interferon-gamma stimulated genes is inhibited. This Homo sapiens (Human) protein is Tegument protein UL23 (UL23).